A 216-amino-acid chain; its full sequence is Ethylene-inducing xylanase (216 aa).

The signal sequence occupies residues 1–19; sequence MVSFSSLFVAACAAVTAFA. One can recognise a GH11 domain in the interval 28–216; sequence AITTSQQGTS…SSGSSDITVS (189 aa). The active-site Nucleophile is E112. E203 serves as the catalytic Proton donor.

This sequence belongs to the glycosyl hydrolase 11 (cellulase G) family.

The protein localises to the secreted. It catalyses the reaction Endohydrolysis of (1-&gt;4)-beta-D-xylosidic linkages in xylans.. It functions in the pathway glycan degradation; xylan degradation. In terms of biological role, endo-1,4-beta-xylanase involved in the hydrolysis of xylan, a major structural heterogeneous polysaccharide found in plant biomass representing the second most abundant polysaccharide in the biosphere, after cellulose. Acts as a pathogen-associated molecular pattern (PAMP) that can trigger plant cell death. Triggers a series of immune responses in citrus fruit and enhanced the resistance of citrus and other fruit against fungal pathogens. The chain is Ethylene-inducing xylanase from Penicillium digitatum (strain Pd1 / CECT 20795) (Green mold).